Reading from the N-terminus, the 293-residue chain is Glutamyl-Q tRNA(Asp) synthetase (293 aa).

L-glutamate contacts are provided by residues Arg-26–Ser-30 and Asp-62. The short motif at Pro-29 to Asn-39 is the 'HIGH' region element. Zn(2+)-binding residues include Cys-118, Cys-120, Tyr-131, and Cys-135. The L-glutamate site is built by Tyr-178 and Arg-196. Positions Lys-234–Arg-238 match the 'KMSKS' region motif. Lys-237 serves as a coordination point for ATP.

Belongs to the class-I aminoacyl-tRNA synthetase family. GluQ subfamily. Zn(2+) is required as a cofactor.

Catalyzes the tRNA-independent activation of glutamate in presence of ATP and the subsequent transfer of glutamate onto a tRNA(Asp). Glutamate is transferred on the 2-amino-5-(4,5-dihydroxy-2-cyclopenten-1-yl) moiety of the queuosine in the wobble position of the QUC anticodon. In Synechococcus sp. (strain CC9605), this protein is Glutamyl-Q tRNA(Asp) synthetase.